Consider the following 337-residue polypeptide: Vacuolar protein sorting-associated protein 26B-B (337 aa).

The segment at 313–337 (RFEGTSHPETRPQHSGAAALEQEHE) is disordered.

The protein belongs to the VPS26 family. Component of the heterotrimeric retromer cargo-selective complex (CSC) which is believed to associate with variable sorting nexins to form functionally distinct retromer complex variants.

It localises to the cytoplasm. Its subcellular location is the membrane. The protein resides in the endosome. In terms of biological role, acts as a component of the retromer cargo-selective complex (CSC). The CSC is believed to be the core functional component of retromer or respective retromer complex variants acting to prevent missorting of selected transmembrane cargo proteins into the lysosomal degradation pathway. Retromer mediates retrograde transport of cargo proteins from endosomes to the trans-Golgi network (TGN). The chain is Vacuolar protein sorting-associated protein 26B-B (vps26b-b) from Xenopus laevis (African clawed frog).